Consider the following 478-residue polypeptide: MQLTLNEKRLLLELVKTETTTPEEMGTILDRPADSVIQYGGLLSQKGLAQVDRAVTTTLTLTEEGTQYLKEGLPERQLYDSFSESASIADLNTHPHAKIGLGWMKRLGWVKIEAGNVIKTGDPAPSPIELALKNPDAAPADIKKDLLKRGLVTEEESVRYTITITDEGKKLAAAGITLTQETGTLTADQISSGAWKDLSLRRYDITKHPRPVWPGKIHPYQRMIDEMRRILLDMGFTELHGSIIQGAFWNFDALFQPQDHPAREMQDTFHLAGKQELPVGWEKVRDMHESGGETSSTGWGGKWDPEKAKATVLRTHTTSLSIQHLAAHPEPPVKAFCIGRVYRREAIDPTHLPEFEQLEGIVMDTHVNFRNLLGYLKEFYGRMGFESVRFRPGYFPYTEPSVEPEVYIEGLGWVELGGAGIFREEVTAPWGITCPVLAWGLGVSRVAMLRMGLTDLRELYQSDIDWVRNVPVVQGGRC.

L-phenylalanine contacts are provided by residues Thr-318, 357–359 (QLE), and Tyr-397. Glu-399 serves as a coordination point for Mg(2+). Residue Phe-422 coordinates L-phenylalanine.

Belongs to the class-II aminoacyl-tRNA synthetase family. Phe-tRNA synthetase alpha subunit type 2 subfamily. In terms of assembly, tetramer of two alpha and two beta subunits. Mg(2+) is required as a cofactor.

The protein localises to the cytoplasm. The catalysed reaction is tRNA(Phe) + L-phenylalanine + ATP = L-phenylalanyl-tRNA(Phe) + AMP + diphosphate + H(+). The polypeptide is Phenylalanine--tRNA ligase alpha subunit (Methanospirillum hungatei JF-1 (strain ATCC 27890 / DSM 864 / NBRC 100397 / JF-1)).